Consider the following 346-residue polypeptide: Protein Spea_1705 (346 aa).

Cys101 functions as the Proton acceptor in the catalytic mechanism. Substrate is bound by residues Gly102–His103, Asp262, and Gly267–Thr268.

It belongs to the proline racemase family.

It catalyses the reaction trans-3-hydroxy-L-proline = 1-pyrroline-2-carboxylate + H2O. Its function is as follows. In vitro, catalyzes the dehydration of trans-3-hydroxy-L-proline (t3LHyp) to Delta(1)-pyrroline-2-carboxylate (Pyr2C), albeit with very low efficiency. The physiological substrate may be different. Displays neither trans-4-hydroxy-L-proline (t4LHyp) epimerase nor proline racemase activity. The chain is Protein Spea_1705 from Shewanella pealeana (strain ATCC 700345 / ANG-SQ1).